A 406-amino-acid polypeptide reads, in one-letter code: MDRLDANVSSNEGFGSVEKVVLLTFFAMVILMAILGNLLVMVAVCRDRQLRKIKTNYFIVSLAFADLLVSVLVNAFGAIELVQDIWFYGEMFCLVRTSLDVLLTTASIFHLCCISLDRYYAICCQPLVYRNKMTPLRIALMLGGCWVIPMFISFLPIMQGWNNIGIVDVIEKRKFNHNSNSTFCVFMVNKPYAITCSVVAFYIPFLLMVLAYYRIYVTAKEHAQQIQMLQRAGATSESRPQTADQHSTHRMRTETKAAKTLCVIMGCFCFCWAPFFVTNIVDPFIDYTVPEKVWTAFLWLGYINSGLNPFLYAFLNKSFRRAFLIILCCDDERYKRPPILGQTVPCSTTTINGSTHVLRDTVECGGQWESRCHLTATSPLVAAQPVIRRPQDNDLEDSCSLKRSQS.

Residues 1-19 are Extracellular-facing; that stretch reads MDRLDANVSSNEGFGSVEK. Residue asparagine 7 is glycosylated (N-linked (GlcNAc...) asparagine). A helical transmembrane segment spans residues 20 to 44; it reads VVLLTFFAMVILMAILGNLLVMVAV. Over 45-54 the chain is Cytoplasmic; sequence CRDRQLRKIK. The chain crosses the membrane as a helical span at residues 55 to 78; sequence TNYFIVSLAFADLLVSVLVNAFGA. The Extracellular portion of the chain corresponds to 79 to 92; that stretch reads IELVQDIWFYGEMF. A helical transmembrane segment spans residues 93 to 117; sequence CLVRTSLDVLLTTASIFHLCCISLD. Cysteines 93 and 184 form a disulfide. Position 100 (aspartate 100) interacts with serotonin. The Cytoplasmic portion of the chain corresponds to 118 to 133; sequence RYYAICCQPLVYRNKM. Residues 134–157 form a helical membrane-spanning segment; that stretch reads TPLRIALMLGGCWVIPMFISFLPI. Residues 158–188 are Extracellular-facing; it reads MQGWNNIGIVDVIEKRKFNHNSNSTFCVFMV. Residues 189 to 212 traverse the membrane as a helical segment; that stretch reads NKPYAITCSVVAFYIPFLLMVLAY. Over 213–257 the chain is Cytoplasmic; sequence YRIYVTAKEHAQQIQMLQRAGATSESRPQTADQHSTHRMRTETKA. Residues 258-283 form a helical membrane-spanning segment; sequence AKTLCVIMGCFCFCWAPFFVTNIVDP. Asparagine 279 is a serotonin binding site. Topologically, residues 284-290 are extracellular; the sequence is FIDYTVP. Residues 291-314 form a helical membrane-spanning segment; that stretch reads EKVWTAFLWLGYINSGLNPFLYAF. Over 315–406 the chain is Cytoplasmic; it reads LNKSFRRAFL…DSCSLKRSQS (92 aa).

Belongs to the G-protein coupled receptor 1 family. Interacts (via C-terminus 330-346 AA) with GRK5; this interaction is promoted by 5-HT (serotonin). In terms of tissue distribution, in brain, isoform 5-HT4S is restricted to the striatum. In peripheral tissues, differential expression is also observed in the atrium of the heart where only isoform 5-HT4S is detectable. In brain, isoform 5-HT4L is expressed throughout the brain, except in the cerebellum.

It is found in the cell membrane. Its subcellular location is the endosome membrane. In terms of biological role, G-protein coupled receptor for 5-hydroxytryptamine (serotonin), a biogenic hormone that functions as a neurotransmitter, a hormone and a mitogen. Ligand binding causes a conformation change that triggers signaling via guanine nucleotide-binding proteins (G proteins) and modulates the activity of downstream effectors. HTR4 is coupled to G(s) G alpha proteins and mediates activation of adenylate cyclase activity. The chain is 5-hydroxytryptamine receptor 4 (Htr4) from Rattus norvegicus (Rat).